The primary structure comprises 99 residues: UPF0213 protein YazA (99 aa).

Residues 4 to 79 form the GIY-YIG domain; sequence NNHFFYVVKC…KKLTRKKKEL (76 aa).

This sequence belongs to the UPF0213 family.

The chain is UPF0213 protein YazA (yazA) from Bacillus subtilis (strain 168).